Here is a 270-residue protein sequence, read N- to C-terminus: Glutamate 5-kinase (270 aa).

Position 18 (K18) interacts with ATP. The substrate site is built by S54, D141, and N153. 173–174 (SD) is an ATP binding site.

This sequence belongs to the glutamate 5-kinase family.

It localises to the cytoplasm. The enzyme catalyses L-glutamate + ATP = L-glutamyl 5-phosphate + ADP. Its pathway is amino-acid biosynthesis; L-proline biosynthesis; L-glutamate 5-semialdehyde from L-glutamate: step 1/2. Catalyzes the transfer of a phosphate group to glutamate to form L-glutamate 5-phosphate. The sequence is that of Glutamate 5-kinase from Leifsonia xyli subsp. xyli (strain CTCB07).